We begin with the raw amino-acid sequence, 424 residues long: O-methyltransferase bfoD (424 aa).

Residue aspartate 275 coordinates S-adenosyl-L-methionine. Catalysis depends on histidine 326, which acts as the Proton acceptor.

It belongs to the class I-like SAM-binding methyltransferase superfamily. Cation-independent O-methyltransferase family.

It participates in secondary metabolite biosynthesis. Its function is as follows. Cytochrome P450 monooxygenase; part of the gene cluster that mediates the biosynthesis of bifonsecin B, a dimeric gamma-naphthopyrone. The first step in the biosynthesis of bifonsecin B is the production of gamma-naphthopyrone precursor YWA1 by the non-reducing polyketide synthase albA, via condensation of one acetyl-CoA starter unit with 6 malonyl-CoA units. YWA1 is then methylated by bfoE at position C-6 to yield foncesin which is further methylated at position C-8 by bfoD to produce fonsecin B. A key enzyme in the biosynthetic pathway is the cytochrome P450 monooxygenase bfoB which catalyzes the oxidative dimerization of fonsecin B to bifonsecin B. Bfob also catalyzes the oxidative dimerization of rubrofusarin B into nigerone. The stereoselectivity of bfoB is influenced by the two natural monomeric substrates; homodimerization of fonsecin B yields a stereochemically pure biaryl, M-foncerine B, while rubrofusarin B yields a mixture of enantiomers M- and P-nigerone. This Aspergillus brasiliensis (strain CBS 101740 / IMI 381727 / IBT 21946) protein is O-methyltransferase bfoD.